We begin with the raw amino-acid sequence, 504 residues long: Glutamate--tRNA ligase (504 aa).

A 'HIGH' region motif is present at residues Pro27–Leu37. The 'KMSKS' region signature appears at Lys271–Arg275. ATP is bound at residue Lys274.

The protein belongs to the class-I aminoacyl-tRNA synthetase family. Glutamate--tRNA ligase type 1 subfamily. As to quaternary structure, monomer.

The protein resides in the cytoplasm. The catalysed reaction is tRNA(Glu) + L-glutamate + ATP = L-glutamyl-tRNA(Glu) + AMP + diphosphate. Its function is as follows. Catalyzes the attachment of glutamate to tRNA(Glu) in a two-step reaction: glutamate is first activated by ATP to form Glu-AMP and then transferred to the acceptor end of tRNA(Glu). In Arthrobacter sp. (strain FB24), this protein is Glutamate--tRNA ligase.